The chain runs to 277 residues: MGIKTYKPKTSSLRYKTTLSFDDLSKGNDPLKSLTKGKKLKSGRDSSGRISIRRRGGGHKRKYRLIDFNRRDKFSIPARVASIEYDPNRSANIALLVYKDGEKRYIISPKGIKVGDVLESGPNAPIKIGNALPLENIPIGRTIHNIELNVGKGGQLVRSAGGYAMILASDGNYVTVKLSSGEMRLIFKKCIATIGEIGNEDYANVSIGKAGKSRWLGRRPKVRGVAMNPVDHPHGGGEGKTSGGRHPVSPWGQPTKGYKTRKKKRYSDKFIIKRRNK.

Disordered stretches follow at residues 32–58 and 225–277; these read KSLTKGKKLKSGRDSSGRISIRRRGGG and VAMN…RRNK. Over residues 258–277 the composition is skewed to basic residues; sequence YKTRKKKRYSDKFIIKRRNK.

This sequence belongs to the universal ribosomal protein uL2 family. As to quaternary structure, part of the 50S ribosomal subunit. Forms a bridge to the 30S subunit in the 70S ribosome.

One of the primary rRNA binding proteins. Required for association of the 30S and 50S subunits to form the 70S ribosome, for tRNA binding and peptide bond formation. It has been suggested to have peptidyltransferase activity; this is somewhat controversial. Makes several contacts with the 16S rRNA in the 70S ribosome. This chain is Large ribosomal subunit protein uL2, found in Borrelia garinii subsp. bavariensis (strain ATCC BAA-2496 / DSM 23469 / PBi) (Borreliella bavariensis).